Here is a 350-residue protein sequence, read N- to C-terminus: Probable dual-specificity RNA methyltransferase RlmN (350 aa).

In terms of domain architecture, Radical SAM core spans 105-342 (ANGKNSVCIS…VRQSKGANIN (238 aa)). A disulfide bridge connects residues cysteine 112 and cysteine 345. Residues cysteine 119, cysteine 123, and cysteine 126 each coordinate [4Fe-4S] cluster. S-adenosyl-L-methionine is bound by residues 166 to 167 (GE), serine 198, 221 to 223 (SLH), and asparagine 302. Residue cysteine 345 is the S-methylcysteine intermediate of the active site.

The protein belongs to the radical SAM superfamily. RlmN family. [4Fe-4S] cluster serves as cofactor.

The protein resides in the cytoplasm. The enzyme catalyses adenosine(2503) in 23S rRNA + 2 reduced [2Fe-2S]-[ferredoxin] + 2 S-adenosyl-L-methionine = 2-methyladenosine(2503) in 23S rRNA + 5'-deoxyadenosine + L-methionine + 2 oxidized [2Fe-2S]-[ferredoxin] + S-adenosyl-L-homocysteine. It catalyses the reaction adenosine(37) in tRNA + 2 reduced [2Fe-2S]-[ferredoxin] + 2 S-adenosyl-L-methionine = 2-methyladenosine(37) in tRNA + 5'-deoxyadenosine + L-methionine + 2 oxidized [2Fe-2S]-[ferredoxin] + S-adenosyl-L-homocysteine. Functionally, specifically methylates position 2 of adenine 2503 in 23S rRNA and position 2 of adenine 37 in tRNAs. The polypeptide is Probable dual-specificity RNA methyltransferase RlmN (Endomicrobium trichonymphae).